Here is a 523-residue protein sequence, read N- to C-terminus: Beta-glucosidase 31 (523 aa).

The first 22 residues, 1-22 (MTPARVVFICCVVLLAAAAAAA), serve as a signal peptide directing secretion. Residues Gln-49, His-149, and 194–195 (NE) contribute to the a beta-D-glucoside site. The active-site Proton donor is Glu-195. Cys-214 and Cys-223 are oxidised to a cystine. Asn-227 carries N-linked (GlcNAc...) asparagine glycosylation. Positions 339 and 413 each coordinate a beta-D-glucoside. Catalysis depends on Glu-413, which acts as the Nucleophile. N-linked (GlcNAc...) asparagine glycosylation is present at Asn-450. Residues Trp-460, 467–468 (EY), and Phe-476 contribute to the a beta-D-glucoside site.

The protein belongs to the glycosyl hydrolase 1 family.

The catalysed reaction is Hydrolysis of terminal, non-reducing beta-D-glucosyl residues with release of beta-D-glucose.. In Oryza sativa subsp. japonica (Rice), this protein is Beta-glucosidase 31 (BGLU31).